The following is a 370-amino-acid chain: 3-isopropylmalate dehydrogenase (370 aa).

NAD(+) is bound at residue 77 to 90 (GPKWDSVPYEVRPE). Substrate-binding residues include R97, R107, R135, and D226. Residues D226, D250, and D254 each coordinate Mg(2+). An NAD(+)-binding site is contributed by 290 to 302 (GSAPDIAGKGIAN).

Belongs to the isocitrate and isopropylmalate dehydrogenases family. LeuB type 1 subfamily. Homodimer. The cofactor is Mg(2+). Mn(2+) serves as cofactor.

It localises to the cytoplasm. The enzyme catalyses (2R,3S)-3-isopropylmalate + NAD(+) = 4-methyl-2-oxopentanoate + CO2 + NADH. It participates in amino-acid biosynthesis; L-leucine biosynthesis; L-leucine from 3-methyl-2-oxobutanoate: step 3/4. In terms of biological role, catalyzes the oxidation of 3-carboxy-2-hydroxy-4-methylpentanoate (3-isopropylmalate) to 3-carboxy-4-methyl-2-oxopentanoate. The product decarboxylates to 4-methyl-2 oxopentanoate. The sequence is that of 3-isopropylmalate dehydrogenase from Brucella melitensis biotype 1 (strain ATCC 23456 / CCUG 17765 / NCTC 10094 / 16M).